Here is a 229-residue protein sequence, read N- to C-terminus: MEFSQKLYQAAKPIINDIYEDDFIQKMLLGNIQADALRHYLQADAAYLKEFTNLYALLIPKMNSMNDVKFLVEQIEFMVEGEVLAHDILAQIVGESYEEIIKTKVWPPSGDHYIKHMYFQAHSRENAIYTIAAMAPCPYIYAELAKRSQSDHKLNREKDTAKWFDFYSTEMDDIINVFESLMNKLAESMSDKELEQVKQVFLESCIHERRFFNMAMTLEQWEFGGKVND.

Asp44 is a substrate binding site. The active-site Nucleophile is the Cys137. 2 residues coordinate substrate: Tyr141 and Tyr167. The Proton donor role is filled by Glu208.

This sequence belongs to the TenA family. In terms of assembly, homotetramer.

The catalysed reaction is 4-amino-5-aminomethyl-2-methylpyrimidine + H2O = 4-amino-5-hydroxymethyl-2-methylpyrimidine + NH4(+). It carries out the reaction thiamine + H2O = 5-(2-hydroxyethyl)-4-methylthiazole + 4-amino-5-hydroxymethyl-2-methylpyrimidine + H(+). The protein operates within cofactor biosynthesis; thiamine diphosphate biosynthesis. In terms of biological role, catalyzes an amino-pyrimidine hydrolysis reaction at the C5' of the pyrimidine moiety of thiamine compounds, a reaction that is part of a thiamine salvage pathway. Thus, catalyzes the conversion of 4-amino-5-aminomethyl-2-methylpyrimidine to 4-amino-5-hydroxymethyl-2-methylpyrimidine (HMP). Is also able to catalyze the hydrolytic cleavage of thiamine; however, this thiaminase activity may not be physiologically relevant. Therefore, is probably involved in the regeneration of the thiamine pyrimidine from thiamine degraded products present in the environment, rather than in thiamine degradation. In Staphylococcus aureus (strain MRSA252), this protein is Aminopyrimidine aminohydrolase.